Consider the following 285-residue polypeptide: Acrosomal protein SP-10 (285 aa).

A signal peptide spans 1-21 (MNMFLLLMSLYLLGSARGTSG). The disordered stretch occupies residues 64 to 200 (TLSEHGSSEH…GEQPSGAPIS (137 aa)). Tandem repeats lie at residues 66–70 (SEHGS), 71–75 (SEHGS), 85–89 (PGEHA), 91–95 (SEHAS), 110–114 (VGEQP), 115–119 (SGEQP), 120–124 (SGEHL), 125–129 (SGEQS), 130–134 (LGEHA), 135–139 (SGEQP), 145–149 (SGEHA), 150–154 (SGEQP), 155–159 (SGEHA), 160–164 (SGEQP), 165–169 (SGEQP), 170–174 (SGEHA), 175–179 (SGEQS), 180–184 (LGEHA), and 190–194 (SGEQP). Positions 66 to 95 (SEHGSSEHGSREHTVAEHTPGEHAESEHAS) are 3 X 5 AA repeats of S-E-H-[GA]-A. Residues 69 to 95 (GSSEHGSREHTVAEHTPGEHAESEHAS) are compositionally biased toward basic and acidic residues. The tract at residues 85–184 (PGEHAESEHA…SGEQSLGEHA (100 aa)) is 7 X 5 AA repeats of S-G-E-H-[AL]. The tract at residues 110–194 (VGEQPSGEQP…LSEKPSGEQP (85 aa)) is 9 X 5 AA repeats of [SV]-G-E-Q-[PSA]. The N-linked (GlcNAc...) asparagine glycan is linked to Asn-278.

In terms of tissue distribution, testis.

It localises to the cytoplasmic vesicle. It is found in the secretory vesicle. Its subcellular location is the acrosome. The polypeptide is Acrosomal protein SP-10 (ACRV1) (Papio hamadryas (Hamadryas baboon)).